We begin with the raw amino-acid sequence, 121 residues long: Non-structural protein 3a (121 aa).

A signal peptide spans methionine 1 to serine 39.

This chain is Non-structural protein 3a, found in Bat coronavirus HKU5 (BtCoV).